We begin with the raw amino-acid sequence, 312 residues long: tRNA pseudouridine synthase B (312 aa).

Asp-37 functions as the Nucleophile in the catalytic mechanism.

Belongs to the pseudouridine synthase TruB family. Type 1 subfamily.

The catalysed reaction is uridine(55) in tRNA = pseudouridine(55) in tRNA. Responsible for synthesis of pseudouridine from uracil-55 in the psi GC loop of transfer RNAs. The chain is tRNA pseudouridine synthase B from Thermus thermophilus (strain ATCC BAA-163 / DSM 7039 / HB27).